The primary structure comprises 308 residues: MSETPRLLFVHAHPDDESLSNGATIAHYTSRGAQVQVVTCTLGEEGEVIGDRWAELTVDHADQLGGYRIFELTEALRALGVSAPIYLGGAGRWRDSGMRGTAPRRRQRFIDADENEAVGALVAIIRELRPHVVVTYDPHGGYGHPDHVHTHFITAAAVASSGVAAGLEVGADEYPGKPWKVPKFYWSVFALSAFEAGMNALQGKDLRPEWTIPPREEFYFGYSDKDIDAVVEATSDVWAAKTAALTAHATQVVVGPTGRACALSNNMVMPIFAQEHYVLAAGSAGNRDERGWETDLLAGLCLDGFDAR.

Zn(2+) is bound by residues His-13, Asp-16, and His-147.

Belongs to the MshB deacetylase family. Zn(2+) is required as a cofactor.

The enzyme catalyses 1D-myo-inositol 2-acetamido-2-deoxy-alpha-D-glucopyranoside + H2O = 1D-myo-inositol 2-amino-2-deoxy-alpha-D-glucopyranoside + acetate. Catalyzes the deacetylation of 1D-myo-inositol 2-acetamido-2-deoxy-alpha-D-glucopyranoside (GlcNAc-Ins) in the mycothiol biosynthesis pathway. This chain is 1D-myo-inositol 2-acetamido-2-deoxy-alpha-D-glucopyranoside deacetylase, found in Mycobacterium leprae (strain Br4923).